Here is a 1072-residue protein sequence, read N- to C-terminus: Carbamoyl phosphate synthase large chain (1072 aa).

The carboxyphosphate synthetic domain stretch occupies residues 1 to 401 (MPKRLDINTI…SLLKAVRSLE (401 aa)). Residues arginine 129, arginine 169, glycine 175, glycine 176, lysine 208, isoleucine 210, glutamate 215, glycine 241, valine 242, histidine 243, glutamine 284, and glutamate 298 each contribute to the ATP site. Positions 133–327 (RTLMQELNEP…IAKLAAKIAV (195 aa)) constitute an ATP-grasp 1 domain. Residues glutamine 284, glutamate 298, and asparagine 300 each coordinate Mg(2+). The Mn(2+) site is built by glutamine 284, glutamate 298, and asparagine 300. The interval 402 to 546 (LGIYHLELNH…YSTYGDENES (145 aa)) is oligomerization domain. A carbamoyl phosphate synthetic domain region spans residues 547–929 (IVTERKSVMV…ALYKGLVAAG (383 aa)). In terms of domain architecture, ATP-grasp 2 spans 671–861 (EAALTELGIP…MANIATKVIL (191 aa)). ATP-binding residues include arginine 707, arginine 746, glutamate 752, glycine 777, valine 778, histidine 779, serine 780, glutamine 820, and glutamate 832. 3 residues coordinate Mg(2+): glutamine 820, glutamate 832, and asparagine 834. Residues glutamine 820, glutamate 832, and asparagine 834 each coordinate Mn(2+). The MGS-like domain maps to 930-1072 (ISIPTHGSVI…PTTRHEVVHA (143 aa)). An allosteric domain region spans residues 930–1072 (ISIPTHGSVI…PTTRHEVVHA (143 aa)).

This sequence belongs to the CarB family. As to quaternary structure, composed of two chains; the small (or glutamine) chain promotes the hydrolysis of glutamine to ammonia, which is used by the large (or ammonia) chain to synthesize carbamoyl phosphate. Tetramer of heterodimers (alpha,beta)4. It depends on Mg(2+) as a cofactor. The cofactor is Mn(2+).

The enzyme catalyses hydrogencarbonate + L-glutamine + 2 ATP + H2O = carbamoyl phosphate + L-glutamate + 2 ADP + phosphate + 2 H(+). The catalysed reaction is hydrogencarbonate + NH4(+) + 2 ATP = carbamoyl phosphate + 2 ADP + phosphate + 2 H(+). Its pathway is amino-acid biosynthesis; L-arginine biosynthesis; carbamoyl phosphate from bicarbonate: step 1/1. It functions in the pathway pyrimidine metabolism; UMP biosynthesis via de novo pathway; (S)-dihydroorotate from bicarbonate: step 1/3. In terms of biological role, large subunit of the glutamine-dependent carbamoyl phosphate synthetase (CPSase). CPSase catalyzes the formation of carbamoyl phosphate from the ammonia moiety of glutamine, carbonate, and phosphate donated by ATP, constituting the first step of 2 biosynthetic pathways, one leading to arginine and/or urea and the other to pyrimidine nucleotides. The large subunit (synthetase) binds the substrates ammonia (free or transferred from glutamine from the small subunit), hydrogencarbonate and ATP and carries out an ATP-coupled ligase reaction, activating hydrogencarbonate by forming carboxy phosphate which reacts with ammonia to form carbamoyl phosphate. The chain is Carbamoyl phosphate synthase large chain from Bacillus cytotoxicus (strain DSM 22905 / CIP 110041 / 391-98 / NVH 391-98).